We begin with the raw amino-acid sequence, 96 residues long: Transcription and mRNA export factor SUS1 (96 aa).

Lysine 68 participates in a covalent cross-link: Glycyl lysine isopeptide (Lys-Gly) (interchain with G-Cter in ubiquitin).

The protein belongs to the ENY2 family. As to quaternary structure, component of the nuclear pore complex (NPC)-associated TREX-2 complex (transcription and export complex 2), composed of at least SUS1, SAC3, THP1, SEM1, and CDC31. TREX-2 contains 2 SUS1 chains. The TREX-2 complex interacts with the nucleoporin NUP1. Component of the 1.8 MDa SAGA transcription coactivator-HAT complex. SAGA is built of 5 distinct domains with specialized functions. Within the SAGA complex, SUS1, SGF11, SGF73 and UBP8 form an additional subcomplex of SAGA called the DUB module (deubiquitination module). Interacts directly with THP1, SAC3, SGF11, and with the RNA polymerase II.

It localises to the nucleus. The protein resides in the nucleoplasm. It is found in the cytoplasm. The protein localises to the P-body. Its function is as follows. Involved in mRNA export coupled transcription activation by association with both the TREX-2 and the SAGA complexes. At the promoters, SAGA is required for recruitment of the basal transcription machinery. It influences RNA polymerase II transcriptional activity through different activities such as TBP interaction and promoter selectivity, interaction with transcription activators, and chromatin modification through histone acetylation and deubiquitination. Within the SAGA complex, participates in a subcomplex required for deubiquitination of H2B and for the maintenance of steady-state H3 methylation levels. The TREX-2 complex functions in docking export-competent ribonucleoprotein particles (mRNPs) to the nuclear entrance of the nuclear pore complex (nuclear basket). TREX-2 participates in mRNA export and accurate chromatin positioning in the nucleus by tethering genes to the nuclear periphery. May also be involved in cytoplasmic mRNA decay by interaction with components of P-bodies. This is Transcription and mRNA export factor SUS1 from Saccharomyces cerevisiae (strain RM11-1a) (Baker's yeast).